The sequence spans 386 residues: Protein U3 (386 aa).

The chain is Protein U3 (U3) from Human herpesvirus 6B (strain Z29) (HHV-6 variant B).